Consider the following 132-residue polypeptide: MKKEGILNSELAKIADDLGHTDQVCIGDLGLPVPSGVKKIDLALTRGKPTFQEVLDIYLENILVEKIYLADEIKENNPEQLKILLTKLSADVEVVFVSHETLKLMNHDVKAVVRTGENTPYSNIILQSGVAL.

Histidine 20 (proton donor) is an active-site residue. Residues aspartate 28, histidine 99, and 121-123 contribute to the substrate site; that span reads YSN.

This sequence belongs to the RbsD / FucU family. RbsD subfamily. In terms of assembly, homodecamer.

It localises to the cytoplasm. The enzyme catalyses beta-D-ribopyranose = beta-D-ribofuranose. It participates in carbohydrate metabolism; D-ribose degradation; D-ribose 5-phosphate from beta-D-ribopyranose: step 1/2. Functionally, catalyzes the interconversion of beta-pyran and beta-furan forms of D-ribose. The sequence is that of D-ribose pyranase from Lactococcus lactis subsp. cremoris (strain MG1363).